The following is a 357-amino-acid chain: Peptide chain release factor 1 (357 aa).

Residue glutamine 234 is modified to N5-methylglutamine. The segment at 283-313 (SKKQEQRSSNRKQQVGSGDRSERIRTYNFPQ) is disordered.

Belongs to the prokaryotic/mitochondrial release factor family. Methylated by PrmC. Methylation increases the termination efficiency of RF1.

It is found in the cytoplasm. Its function is as follows. Peptide chain release factor 1 directs the termination of translation in response to the peptide chain termination codons UAG and UAA. The protein is Peptide chain release factor 1 of Borrelia garinii subsp. bavariensis (strain ATCC BAA-2496 / DSM 23469 / PBi) (Borreliella bavariensis).